Reading from the N-terminus, the 810-residue chain is Coiled-coil domain-containing protein 15 (810 aa).

Coiled-coil stretches lie at residues 65-89 (VVEE…RQVR), 160-189 (DGEN…SFKT), and 638-669 (MDIE…EQQR).

Interacts with POC5, POC1B, CETN2 and FAM161A.

It localises to the cytoplasm. The protein resides in the cytoskeleton. It is found in the microtubule organizing center. The protein localises to the centrosome. Its subcellular location is the centriole. It localises to the centriolar satellite. Functionally, plays an important role in primary cilium assembly, maintenance, and length regulation. Interacts with centriole inner scaffold proteins to promote proper centriole size and integrity and assembly of functional cilia. Required for the recruitment of both the inner scaffold protein POC1B and the distal SFI1/CETN2 complex to centrioles. The chain is Coiled-coil domain-containing protein 15 (Ccdc15) from Mus musculus (Mouse).